The chain runs to 254 residues: 4-hydroxy-tetrahydrodipicolinate reductase (254 aa).

8–13 (GAFGRM) provides a ligand contact to NAD(+). Lysine 36 serves as a coordination point for NADP(+). NAD(+) contacts are provided by residues 89-91 (GTT) and 115-118 (STNY). The active-site Proton donor/acceptor is the histidine 147. Residue histidine 148 participates in (S)-2,3,4,5-tetrahydrodipicolinate binding. Lysine 151 acts as the Proton donor in catalysis. 157 to 158 (GT) lines the (S)-2,3,4,5-tetrahydrodipicolinate pocket.

The protein belongs to the DapB family.

The protein localises to the cytoplasm. The enzyme catalyses (S)-2,3,4,5-tetrahydrodipicolinate + NAD(+) + H2O = (2S,4S)-4-hydroxy-2,3,4,5-tetrahydrodipicolinate + NADH + H(+). It carries out the reaction (S)-2,3,4,5-tetrahydrodipicolinate + NADP(+) + H2O = (2S,4S)-4-hydroxy-2,3,4,5-tetrahydrodipicolinate + NADPH + H(+). The protein operates within amino-acid biosynthesis; L-lysine biosynthesis via DAP pathway; (S)-tetrahydrodipicolinate from L-aspartate: step 4/4. Functionally, catalyzes the conversion of 4-hydroxy-tetrahydrodipicolinate (HTPA) to tetrahydrodipicolinate. This is 4-hydroxy-tetrahydrodipicolinate reductase from Methanospirillum hungatei JF-1 (strain ATCC 27890 / DSM 864 / NBRC 100397 / JF-1).